The chain runs to 63 residues: Putative transmembrane protein ORF63 (63 aa).

Topologically, residues 1–8 (MQSGNFTL) are extracellular. A helical membrane pass occupies residues 9-29 (EVIMYLINSILAFIMIFFTFV). Residues 30–31 (NP) lie on the Cytoplasmic side of the membrane. Residues 32–52 (SLLKCQYWTYILVALITAIIF) traverse the membrane as a helical segment. Residues 53 to 63 (HTGSKVGKSSG) lie on the Extracellular side of the membrane.

The protein localises to the host membrane. This chain is Putative transmembrane protein ORF63, found in Acidianus filamentous virus 1 (isolate United States/Yellowstone) (AFV-1).